Reading from the N-terminus, the 90-residue chain is UPF0237 protein PAE3582 (90 aa).

Residues 5-74 (VVSVLGADRV…LEEEGKRLGV (70 aa)) form the ACT domain.

Belongs to the UPF0237 family.

The polypeptide is UPF0237 protein PAE3582 (Pyrobaculum aerophilum (strain ATCC 51768 / DSM 7523 / JCM 9630 / CIP 104966 / NBRC 100827 / IM2)).